Reading from the N-terminus, the 248-residue chain is tRNA pseudouridine synthase A (248 aa).

The active-site Nucleophile is aspartate 53. Tyrosine 116 serves as a coordination point for substrate.

This sequence belongs to the tRNA pseudouridine synthase TruA family. As to quaternary structure, homodimer.

It carries out the reaction uridine(38/39/40) in tRNA = pseudouridine(38/39/40) in tRNA. Formation of pseudouridine at positions 38, 39 and 40 in the anticodon stem and loop of transfer RNAs. In Helicobacter hepaticus (strain ATCC 51449 / 3B1), this protein is tRNA pseudouridine synthase A.